The following is a 638-amino-acid chain: 1-deoxy-D-xylulose-5-phosphate synthase (638 aa).

Thiamine diphosphate contacts are provided by residues histidine 75 and 116–118; that span reads AHS. Mg(2+) is bound at residue aspartate 147. Thiamine diphosphate is bound by residues 148 to 149, asparagine 177, tyrosine 288, and glutamate 370; that span reads GA. Asparagine 177 contacts Mg(2+).

The protein belongs to the transketolase family. DXPS subfamily. As to quaternary structure, homodimer. Requires Mg(2+) as cofactor. The cofactor is thiamine diphosphate.

The catalysed reaction is D-glyceraldehyde 3-phosphate + pyruvate + H(+) = 1-deoxy-D-xylulose 5-phosphate + CO2. It participates in metabolic intermediate biosynthesis; 1-deoxy-D-xylulose 5-phosphate biosynthesis; 1-deoxy-D-xylulose 5-phosphate from D-glyceraldehyde 3-phosphate and pyruvate: step 1/1. Catalyzes the acyloin condensation reaction between C atoms 2 and 3 of pyruvate and glyceraldehyde 3-phosphate to yield 1-deoxy-D-xylulose-5-phosphate (DXP). This Cupriavidus necator (strain ATCC 17699 / DSM 428 / KCTC 22496 / NCIMB 10442 / H16 / Stanier 337) (Ralstonia eutropha) protein is 1-deoxy-D-xylulose-5-phosphate synthase.